The chain runs to 206 residues: CMP-5'-(N-acetyl-N-hydroxy-3-aminopropyl)phosphonate hydrolase (206 aa).

In terms of domain architecture, Nudix hydrolase spans 37-166 (VRAPGAAIIV…RTVTSGTAIG (130 aa)). A Nudix box motif is present at residues 74-95 (GLVDDREDPAVTAAREAEEETG). Residues 177–194 (RQQPGGVQEQPGGAQQQG) are compositionally biased toward low complexity. A disordered region spans residues 177–206 (RQQPGGVQEQPGGAQQQGMNESHSGRTVRG).

Belongs to the Nudix hydrolase family. Mg(2+) is required as a cofactor.

It carries out the reaction CMP-5'-(N-acetyl-N-hydroxy-3-aminopropyl)phosphonate + H2O = 3-(N-acetyl-N-hydroxy)aminopropylphosphonate + CMP + H(+). The protein operates within antibiotic biosynthesis. In terms of biological role, nucleotide hydrolase involved in the biosynthesis of the phosphonate antibiotic FR-900098, a potent antimalarial agent that acts as an inhibitor of 1-deoxy-D-xylulose 5-phosphate reductoisomerase (DXR), the first enzyme in the nonmevalonate pathway for isoprenoid biosynthesis. Catalyzes the hydrolysis of CMP-5'-(N-acetyl-N-hydroxy-3-aminopropyl)phosphonate (CMP-5'-FR-900098) to produce CMP and the final compound FR-900098. In vitro, has broad substrate specificity and also catalyzes the hydrolysis of all the other CMP-containing intermediates within the pathway and shows low activity toward CTP. The chain is CMP-5'-(N-acetyl-N-hydroxy-3-aminopropyl)phosphonate hydrolase from Streptomyces rubellomurinus (strain ATCC 31215).